The chain runs to 365 residues: Palmitoyltransferase ZDHHC20 (365 aa).

Over 1 to 14 the chain is Cytoplasmic; sequence MAPWTLWRCCQRVV. A helical membrane pass occupies residues 15–35; the sequence is GWVPVLFITFVVVWSYYAYVV. Topologically, residues 36–53 are lumenal; the sequence is ELCVFTIFGNEENGKTVV. The chain crosses the membrane as a helical span at residues 54-74; it reads YLVAFHLFFVMFVWSYWMTIF. Residues 75-169 lie on the Cytoplasmic side of the membrane; the sequence is TSPASPSKEF…NNCVGFSNYK (95 aa). Positions 126–176 constitute a DHHC domain; the sequence is RYCEKCQLIKPDRAHHCSACDSCILKMDHHCPWVNNCVGFSNYKFFLLFLL. Residues cysteine 128 and cysteine 131 each coordinate Zn(2+). Substrate is bound by residues lysine 135 and 140–143; that span reads HHCS. Positions 141, 142, 145, 148, and 155 each coordinate Zn(2+). Catalysis depends on cysteine 156, which acts as the S-palmitoyl cysteine intermediate. Cysteine 162 contributes to the Zn(2+) binding site. A helical membrane pass occupies residues 170 to 190; sequence FFLLFLLYSLLYCLFVAATVL. Topologically, residues 191–207 are lumenal; sequence EYFIKFWTNELTDTRAK. A helical membrane pass occupies residues 208 to 231; sequence FHVLFLFFVSAMFFISVLSLFSYH. Over 232 to 365 the chain is Cytoplasmic; that stretch reads CWLVGKNRTT…NNHVTVAIEN (134 aa). Serine 305, serine 330, and serine 339 each carry phosphoserine.

The protein belongs to the DHHC palmitoyltransferase family. Autopalmitoylated (in vitro).

Its subcellular location is the golgi apparatus membrane. It is found in the cell membrane. It localises to the cytoplasm. The protein localises to the perinuclear region. The protein resides in the endoplasmic reticulum membrane. Its subcellular location is the endoplasmic reticulum-Golgi intermediate compartment membrane. The enzyme catalyses L-cysteinyl-[protein] + hexadecanoyl-CoA = S-hexadecanoyl-L-cysteinyl-[protein] + CoA. The catalysed reaction is L-cysteinyl-[protein] + tetradecanoyl-CoA = S-tetradecanoyl-L-cysteinyl-[protein] + CoA. It catalyses the reaction L-cysteinyl-[protein] + octadecanoyl-CoA = S-octadecanoyl-L-cysteinyl-[protein] + CoA. In terms of biological role, palmitoyltransferase that could catalyze the addition of palmitate onto various protein substrates. Catalyzes palmitoylation of Cys residues in the cytoplasmic C-terminus of EGFR, and modulates the duration of EGFR signaling by modulating palmitoylation-dependent EGFR internalization and degradation. Has a preference for acyl-CoA with C16 fatty acid chains. Can also utilize acyl-CoA with C14 and C18 fatty acid chains. May palmitoylate CALHM1 subunit of gustatory voltage-gated ion channels and modulate channel gating and kinetics. Its function is as follows. (Microbial infection) Dominant palmitoyltransferase responsible for lipidation of SARS coronavirus-2/SARS-CoV-2 spike protein. Through a sequential action with ZDHHC9, rapidly and efficiently palmitoylates spike protein following its synthesis in the endoplasmic reticulum (ER). In the infected cell, promotes spike biogenesis by protecting it from premature ER degradation, increases half-life and controls the lipid organization of its immediate membrane environment. Once the virus has formed, spike palmitoylation controls fusion with the target cell. This chain is Palmitoyltransferase ZDHHC20, found in Homo sapiens (Human).